The primary structure comprises 305 residues: Acetyl-coenzyme A carboxylase carboxyl transferase subunit beta (305 aa).

Residues 27–296 form the CoA carboxyltransferase N-terminal domain; that stretch reads LWVKCSACRE…PAAKADLAAR (270 aa). Cys31, Cys34, Cys50, and Cys53 together coordinate Zn(2+). The C4-type zinc-finger motif lies at 31-53; it reads CSACRELIYKKQLNDNLKVCPKC.

Belongs to the AccD/PCCB family. As to quaternary structure, acetyl-CoA carboxylase is a heterohexamer composed of biotin carboxyl carrier protein (AccB), biotin carboxylase (AccC) and two subunits each of ACCase subunit alpha (AccA) and ACCase subunit beta (AccD). Zn(2+) serves as cofactor.

It is found in the cytoplasm. The catalysed reaction is N(6)-carboxybiotinyl-L-lysyl-[protein] + acetyl-CoA = N(6)-biotinyl-L-lysyl-[protein] + malonyl-CoA. It participates in lipid metabolism; malonyl-CoA biosynthesis; malonyl-CoA from acetyl-CoA: step 1/1. Functionally, component of the acetyl coenzyme A carboxylase (ACC) complex. Biotin carboxylase (BC) catalyzes the carboxylation of biotin on its carrier protein (BCCP) and then the CO(2) group is transferred by the transcarboxylase to acetyl-CoA to form malonyl-CoA. The chain is Acetyl-coenzyme A carboxylase carboxyl transferase subunit beta from Chloroflexus aggregans (strain MD-66 / DSM 9485).